The primary structure comprises 358 residues: Sulfate/thiosulfate import ATP-binding protein CysA (358 aa).

Residues isoleucine 3–valine 237 form the ABC transporter domain. Residue glycine 35–threonine 42 coordinates ATP.

Belongs to the ABC transporter superfamily. Sulfate/tungstate importer (TC 3.A.1.6) family. In terms of assembly, the complex is composed of two ATP-binding proteins (CysA), two transmembrane proteins (CysT and CysW) and a solute-binding protein (CysP).

It is found in the cell inner membrane. It carries out the reaction sulfate(out) + ATP + H2O = sulfate(in) + ADP + phosphate + H(+). The catalysed reaction is thiosulfate(out) + ATP + H2O = thiosulfate(in) + ADP + phosphate + H(+). Part of the ABC transporter complex CysAWTP involved in sulfate/thiosulfate import. Responsible for energy coupling to the transport system. This is Sulfate/thiosulfate import ATP-binding protein CysA from Mannheimia succiniciproducens (strain KCTC 0769BP / MBEL55E).